A 352-amino-acid polypeptide reads, in one-letter code: Peptide chain release factor 1 (352 aa).

Position 233 is an N5-methylglutamine (Q233). The disordered stretch occupies residues 288-309; sequence NAKDRKEQVGSGDRSERIRTYN. Positions 289 to 306 are enriched in basic and acidic residues; the sequence is AKDRKEQVGSGDRSERIR.

It belongs to the prokaryotic/mitochondrial release factor family. Post-translationally, methylated by PrmC. Methylation increases the termination efficiency of RF1.

Its subcellular location is the cytoplasm. In terms of biological role, peptide chain release factor 1 directs the termination of translation in response to the peptide chain termination codons UAG and UAA. The chain is Peptide chain release factor 1 from Helicobacter pylori (strain G27).